We begin with the raw amino-acid sequence, 416 residues long: Serine hydroxymethyltransferase 1 (416 aa).

Residues L121 and 125-127 (GHL) each bind (6S)-5,6,7,8-tetrahydrofolate. K229 bears the N6-(pyridoxal phosphate)lysine mark. (6S)-5,6,7,8-tetrahydrofolate is bound by residues E245 and 354-356 (SPF).

This sequence belongs to the SHMT family. Homodimer. Pyridoxal 5'-phosphate is required as a cofactor.

The protein localises to the cytoplasm. It catalyses the reaction (6R)-5,10-methylene-5,6,7,8-tetrahydrofolate + glycine + H2O = (6S)-5,6,7,8-tetrahydrofolate + L-serine. It functions in the pathway one-carbon metabolism; tetrahydrofolate interconversion. The protein operates within amino-acid biosynthesis; glycine biosynthesis; glycine from L-serine: step 1/1. Catalyzes the reversible interconversion of serine and glycine with tetrahydrofolate (THF) serving as the one-carbon carrier. This reaction serves as the major source of one-carbon groups required for the biosynthesis of purines, thymidylate, methionine, and other important biomolecules. Also exhibits THF-independent aldolase activity toward beta-hydroxyamino acids, producing glycine and aldehydes, via a retro-aldol mechanism. This Vibrio cholerae serotype O1 (strain ATCC 39315 / El Tor Inaba N16961) protein is Serine hydroxymethyltransferase 1.